Reading from the N-terminus, the 668-residue chain is Metastasis-associated protein MTA2 (668 aa).

Positions 1–144 constitute a BAH domain; sequence MAANMYRVGD…PVQKTLLADQ (144 aa). A phosphoserine mark is found at S52 and S54. Residues 145–256 form the ELM2 domain; that stretch reads GEIRVGCKYQ…KAMSTLVPQG (112 aa). N6-acetyllysine is present on K152. One can recognise an SANT domain in the interval 263–315; sequence DEMEEWSASEAMLFEEALEKYGKDFNDIRQDFLPWKSLASIVQFYYMWKTTDR. The GATA-type; atypical zinc-finger motif lies at 367-394; it reads CESCHTTQSAQWYAWGPPNMQCRLCASC. The segment covering 409–419 has biased composition (polar residues); that stretch reads QLEGATRGTTE. A disordered region spans residues 409-437; it reads QLEGATRGTTEPHSRGHLSRPEAQSLSPY. S433 and S435 each carry phosphoserine. The residue at position 460 (K460) is an N6-acetyllysine. K492 is covalently cross-linked (Glycyl lysine isopeptide (Lys-Gly) (interchain with G-Cter in SUMO2 and SUMO3); alternate). A Glycyl lysine isopeptide (Lys-Gly) (interchain with G-Cter in SUMO2); alternate cross-link involves residue K492. K508 is covalently cross-linked (Glycyl lysine isopeptide (Lys-Gly) (interchain with G-Cter in SUMO2)). N6-acetyllysine is present on residues K522 and K531. T534 carries the phosphothreonine modification. A Phosphoserine modification is found at S548. Residues K559 and K595 each participate in a glycyl lysine isopeptide (Lys-Gly) (interchain with G-Cter in SUMO2) cross-link. Disordered stretches follow at residues 580–599 and 647–668; these read ASGI…LNPA and PPVP…VLED.

The protein belongs to the metastasis-associated protein family. As to quaternary structure, component of the nucleosome remodeling and deacetylase (NuRD) repressor complex, composed of core proteins MTA1, MTA2, MTA3, RBBP4, RBBP7, HDAC1, HDAC2, MBD2, MBD3, and peripherally associated proteins CDK2AP1, CDK2AP2, GATAD2A, GATAD2B, CHD3, CHD4 and CHD5. The exact stoichiometry of the NuRD complex is unknown, and some subunits such as MBD2 and MBD3, GATAD2A and GATAD2B, and CHD3, CHD4 and CHD5 define mutually exclusive NuRD complexes. Interacts with CHD3. Interacts with CHD4. Interacts with GATAD2A. Interacts with HDAC7. Interacts with MBD3. Interacts with p53/TP53. Interacts with MINT. Interacts with PIMREG. Interacts with NACC2. Interacts with ERCC6. Interacts with PWWP2B. Interacts with transcription factor BCL11A. Widely expressed.

It localises to the nucleus. May function as a transcriptional coregulator. Acts as a component of the histone deacetylase NuRD complex which participates in the remodeling of chromatin. This is Metastasis-associated protein MTA2 (MTA2) from Homo sapiens (Human).